We begin with the raw amino-acid sequence, 338 residues long: O-methyltransferase 4 (338 aa).

S-adenosyl-L-methionine-binding residues include G184, D207, N230, F231, K244, and R245. H248 serves as the catalytic Proton acceptor.

It belongs to the class I-like SAM-binding methyltransferase superfamily. Cation-independent O-methyltransferase family. COMT subfamily.

It carries out the reaction (3,5-dichloro-2,4,6-trihydroxyphenyl)hexan-1-one + S-adenosyl-L-methionine = 1-(3,5-dichloro-2,6-dihydroxy-4-methoxyphenyl)hexan-1-one + S-adenosyl-L-homocysteine + H(+). The protein is O-methyltransferase 4 (omt4) of Dictyostelium discoideum (Social amoeba).